Here is a 433-residue protein sequence, read N- to C-terminus: B3 domain-containing protein Os04g0676600 (433 aa).

2 disordered regions span residues 1–29 and 216–283; these read MADT…GGGQ and FPPV…NSAN. The segment covering 13–24 has biased composition (basic and acidic residues); it reads GDDRGREGHDDF. Over residues 216-229 the composition is skewed to low complexity; the sequence is FPPVSSSSRSFSSA. The segment covering 237–265 has biased composition (basic and acidic residues); the sequence is DAKKAKKSDIKDQPIVLRRSDTESEKNDE. Polar residues predominate over residues 269-283; the sequence is TPASEPSSMSHNSAN. The segment at residues 297–399 is a DNA-binding region (TF-B3); sequence LRKELTNSDV…KLVVRGEKAI (103 aa).

It is found in the nucleus. Its function is as follows. Probable transcription regulator that binds specifically to the DNA sequence 5'-CATGC-3' of the IDE1 element found in the promoter of the barley iron deficiency-inducible gene IDS2. This Oryza sativa subsp. japonica (Rice) protein is B3 domain-containing protein Os04g0676600.